Reading from the N-terminus, the 118-residue chain is Large ribosomal subunit protein bL19 (118 aa).

It belongs to the bacterial ribosomal protein bL19 family.

Functionally, this protein is located at the 30S-50S ribosomal subunit interface and may play a role in the structure and function of the aminoacyl-tRNA binding site. The protein is Large ribosomal subunit protein bL19 of Geobacter sulfurreducens (strain ATCC 51573 / DSM 12127 / PCA).